The following is a 218-amino-acid chain: Protein-methionine-sulfoxide reductase heme-binding subunit MsrQ (218 aa).

Transmembrane regions (helical) follow at residues 8 to 28 (VIVA…LLGW), 60 to 80 (FLLI…AVLI), 86 to 106 (LGLY…TLDL), 121 to 141 (PYIT…ITST), and 155 to 175 (VHML…WLVK).

It belongs to the MsrQ family. In terms of assembly, heterodimer of a catalytic subunit (MsrP) and a heme-binding subunit (MsrQ). FMN is required as a cofactor. Requires heme b as cofactor.

It is found in the cell inner membrane. Part of the MsrPQ system that repairs oxidized periplasmic proteins containing methionine sulfoxide residues (Met-O), using respiratory chain electrons. Thus protects these proteins from oxidative-stress damage caused by reactive species of oxygen and chlorine generated by the host defense mechanisms. MsrPQ is essential for the maintenance of envelope integrity under bleach stress, rescuing a wide series of structurally unrelated periplasmic proteins from methionine oxidation. MsrQ provides electrons for reduction to the reductase catalytic subunit MsrP, using the quinone pool of the respiratory chain. In Xanthomonas oryzae pv. oryzae (strain MAFF 311018), this protein is Protein-methionine-sulfoxide reductase heme-binding subunit MsrQ.